The following is a 156-amino-acid chain: MSKKKGSNTLAENRKARHDYFIEETYEAGIELVGTEVKSIRQGKANLKDSYAEIRNGEVFVRNMHISPYEQGNIYNKDPLRDRKLLLHKSEIYKLVGFTTQQGYTLIPLSLYLKHGRVKVSLAVAKGKKNYDKRDAMLEKAAKREMDRQIKERSRY.

The protein belongs to the SmpB family.

It is found in the cytoplasm. Its function is as follows. Required for rescue of stalled ribosomes mediated by trans-translation. Binds to transfer-messenger RNA (tmRNA), required for stable association of tmRNA with ribosomes. tmRNA and SmpB together mimic tRNA shape, replacing the anticodon stem-loop with SmpB. tmRNA is encoded by the ssrA gene; the 2 termini fold to resemble tRNA(Ala) and it encodes a 'tag peptide', a short internal open reading frame. During trans-translation Ala-aminoacylated tmRNA acts like a tRNA, entering the A-site of stalled ribosomes, displacing the stalled mRNA. The ribosome then switches to translate the ORF on the tmRNA; the nascent peptide is terminated with the 'tag peptide' encoded by the tmRNA and targeted for degradation. The ribosome is freed to recommence translation, which seems to be the essential function of trans-translation. In Clostridium botulinum (strain Loch Maree / Type A3), this protein is SsrA-binding protein.